Here is a 54-residue protein sequence, read N- to C-terminus: Large ribosomal subunit protein bL32 (54 aa).

A disordered region spans residues 1–26 (MAVQKNKPTRSKRGMRRSHDSLTAPH). Positions 7–16 (KPTRSKRGMR) are enriched in basic residues.

This sequence belongs to the bacterial ribosomal protein bL32 family.

In Buchnera aphidicola subsp. Acyrthosiphon pisum (strain 5A), this protein is Large ribosomal subunit protein bL32.